Consider the following 222-residue polypeptide: Ornithine decarboxylase antizyme 1 (222 aa).

Belongs to the ODC antizyme family. Interacts with ODC1 and thereby sterically blocks ODC homodimerization. Forms a ternary complex with PSMB4 and OAZ1 before PSMB4 is incorporated into the 20S proteasome. Interacts with AZIN2; this interaction disrupts the interaction between the antizyme and ODC1. Interacts with FAM171A1.

Its function is as follows. Ornithine decarboxylase (ODC) antizyme protein that negatively regulates ODC activity and intracellular polyamine biosynthesis and uptake in response to increased intracellular polyamine levels. Binds to ODC monomers, inhibiting the assembly of the functional ODC homodimer, and targets the monomers for ubiquitin-independent proteolytic destruction by the 26S proteasome. Triggers ODC degradation by inducing the exposure of a cryptic proteasome-interacting surface of ODC. Stabilizes AZIN2 by interfering with its ubiquitination. Also inhibits cellular uptake of polyamines by inactivating the polyamine uptake transporter. SMAD1/OAZ1/PSMB4 complex mediates the degradation of the CREBBP/EP300 repressor SNIP1. Involved in the translocation of AZIN2 from ER-Golgi intermediate compartment (ERGIC) to the cytosol. The protein is Ornithine decarboxylase antizyme 1 (OAZ1) of Mesocricetus auratus (Golden hamster).